Reading from the N-terminus, the 363-residue chain is MIIDTTAVQDMNSFSRLQSLKEVSGIIWMLVPILSLVLGITLGVLVIVWLEREISAGIQQRIGPEYAGPMGILQALADGIKLIFKENLLPSRGDTRLFSIGPSIAVISILLSYSVIPFSSHLVLSDLNIGVFLWIAVSSIAPIGLLMSGYGSNNKYSFLGGLRAAAQSISYEIPLTLCLLSISLLSNSSSTVDIVEAQSKYGLWGWNLWRQPIGFLVFLISSLAECERLPFDLPEAEEELVAGYQTEYSGIKFGLFYVASYLNLLVSSLFVTVLYLGGWNISISYIFVPGLFEITKVGRVFGTTIGIFTTLAKTYLFLFISITTRWTLPRLRMDQLLNLGWKFLLPISLGNLLLTTSSQLLSL.

The next 9 membrane-spanning stretches (helical) occupy residues 30-50 (LVPILSLVLGITLGVLVIVWL), 98-118 (FSIGPSIAVISILLSYSVIPF), 129-149 (IGVFLWIAVSSIAPIGLLMSG), 165-185 (AAQSISYEIPLTLCLLSISLL), 203-223 (LWGWNLWRQPIGFLVFLISSL), 248-268 (YSGIKFGLFYVASYLNLLVSS), 269-289 (LFVTVLYLGGWNISISYIFVP), 300-320 (VFGTTIGIFTTLAKTYLFLFI), and 334-354 (DQLLNLGWKFLLPISLGNLLL).

This sequence belongs to the complex I subunit 1 family. As to quaternary structure, NDH is composed of at least 16 different subunits, 5 of which are encoded in the nucleus.

Its subcellular location is the plastid. It is found in the chloroplast thylakoid membrane. The catalysed reaction is a plastoquinone + NADH + (n+1) H(+)(in) = a plastoquinol + NAD(+) + n H(+)(out). The enzyme catalyses a plastoquinone + NADPH + (n+1) H(+)(in) = a plastoquinol + NADP(+) + n H(+)(out). NDH shuttles electrons from NAD(P)H:plastoquinone, via FMN and iron-sulfur (Fe-S) centers, to quinones in the photosynthetic chain and possibly in a chloroplast respiratory chain. The immediate electron acceptor for the enzyme in this species is believed to be plastoquinone. Couples the redox reaction to proton translocation, and thus conserves the redox energy in a proton gradient. The sequence is that of NAD(P)H-quinone oxidoreductase subunit 1, chloroplastic from Oenothera elata subsp. hookeri (Hooker's evening primrose).